Here is a 232-residue protein sequence, read N- to C-terminus: V-type ATP synthase subunit E (232 aa).

The protein belongs to the V-ATPase E subunit family.

In terms of biological role, produces ATP from ADP in the presence of a proton gradient across the membrane. This chain is V-type ATP synthase subunit E (atpE), found in Treponema pallidum (strain Nichols).